The following is a 318-amino-acid chain: uncharacterized protein (318 aa).

This is an uncharacterized protein from Ictaluridae (bullhead catfishes).